Reading from the N-terminus, the 432-residue chain is Adenylosuccinate synthetase (432 aa).

Residues 13–19 and 41–43 contribute to the GTP site; these read GDEGKGK and GHT. Catalysis depends on Asp-14, which acts as the Proton acceptor. 2 residues coordinate Mg(2+): Asp-14 and Gly-41. Residues 14–17, 39–42, Thr-130, Arg-144, Gln-225, Thr-240, and Arg-304 contribute to the IMP site; these read DEGK and NAGH. Residue His-42 is the Proton donor of the active site. 300–306 contributes to the substrate binding site; the sequence is ATTGRRR. Residues Arg-306, 332–334, and 415–417 each bind GTP; these read KLD and STG.

It belongs to the adenylosuccinate synthetase family. As to quaternary structure, homodimer. It depends on Mg(2+) as a cofactor.

The protein localises to the cytoplasm. The catalysed reaction is IMP + L-aspartate + GTP = N(6)-(1,2-dicarboxyethyl)-AMP + GDP + phosphate + 2 H(+). Its pathway is purine metabolism; AMP biosynthesis via de novo pathway; AMP from IMP: step 1/2. Functionally, plays an important role in the de novo pathway of purine nucleotide biosynthesis. Catalyzes the first committed step in the biosynthesis of AMP from IMP. This Pectobacterium carotovorum subsp. carotovorum (strain PC1) protein is Adenylosuccinate synthetase.